We begin with the raw amino-acid sequence, 360 residues long: Ribosomal RNA large subunit methyltransferase M (360 aa).

S-adenosyl-L-methionine is bound by residues serine 187, 220 to 223, aspartate 239, aspartate 259, and aspartate 276; that span reads CPGG. The Proton acceptor role is filled by lysine 305.

Belongs to the class I-like SAM-binding methyltransferase superfamily. RNA methyltransferase RlmE family. RlmM subfamily. As to quaternary structure, monomer.

It is found in the cytoplasm. The enzyme catalyses cytidine(2498) in 23S rRNA + S-adenosyl-L-methionine = 2'-O-methylcytidine(2498) in 23S rRNA + S-adenosyl-L-homocysteine + H(+). In terms of biological role, catalyzes the 2'-O-methylation at nucleotide C2498 in 23S rRNA. This is Ribosomal RNA large subunit methyltransferase M from Shewanella halifaxensis (strain HAW-EB4).